We begin with the raw amino-acid sequence, 209 residues long: MKIQSIFAASFCLLSSISAHAAIQLTVPDEVELILVDNQEVKLESSFFSTTSTLDLENGKHQIVFRYNPVFKQGKDNIIVSSDIIVSTFSAEDKEISFKFPTYNSPEKAKAFNRDLNWELIDKNNNSIPFAQSQLIYNGMQVGRNIQFEVAKFNTTEHPAAFKEGMVTVTHKEIKNEQGDNTAEQMLHYWYEKADQATKERFLKSITNK.

The signal sequence occupies residues Met1–Ala21.

This sequence belongs to the UPF0319 family.

This chain is UPF0319 protein VF_1616, found in Aliivibrio fischeri (strain ATCC 700601 / ES114) (Vibrio fischeri).